The chain runs to 118 residues: MSSAGNKGSDAEQCAAAFLQQQKLTLLEKNYRCRFGEIDLIMREDDTVVFVEVRMRSSDRFGGAAASITAAKQSRLIRTARHYLAGHEGDFPCRFDAVLISGNRENEIEWIRNAFDES.

This sequence belongs to the UPF0102 family.

This chain is UPF0102 protein NE0719, found in Nitrosomonas europaea (strain ATCC 19718 / CIP 103999 / KCTC 2705 / NBRC 14298).